The primary structure comprises 373 residues: Ubiquitin carboxyl-terminal hydrolase 50 (373 aa).

Residues 44 to 364 enclose the USP domain; sequence TGLRNLGNTC…TAYLLFYSCQ (321 aa). The active-site Nucleophile is Cys53. His322 functions as the Proton acceptor in the catalytic mechanism.

The protein belongs to the peptidase C19 family.

The protein localises to the cytoplasm. Its subcellular location is the cytoskeleton. It localises to the microtubule organizing center. It is found in the centrosome. The protein resides in the nucleus. It carries out the reaction Thiol-dependent hydrolysis of ester, thioester, amide, peptide and isopeptide bonds formed by the C-terminal Gly of ubiquitin (a 76-residue protein attached to proteins as an intracellular targeting signal).. Deubiquitinating enzyme that removes conjugated ubiquitin from specific proteins to regulate different cellular processes. Regulates the inflammasome signaling pathway by deubiquitinating 'Lys-63'-linked polyubiquitination of the PYCARD/ASC adapter protein. Regulates the ubiquitination and stability of the ACE2 protein. Acts as a negative regulator of the G2/M checkpoint pathway, by preventing serine/threonine kinase WEE1 degradation, thereby repressing entry into mitosis following activation of the G2/M DNA damage checkpoint. The protein is Ubiquitin carboxyl-terminal hydrolase 50 (USP50) of Macaca fascicularis (Crab-eating macaque).